A 1175-amino-acid chain; its full sequence is Atrophin-1 (1175 aa).

Disordered regions lie at residues 1–595 (MKTR…VTTS), 608–752 (SSPA…ARFN), and 770–847 (VPLE…HRPP). Positions 16 to 32 (RKKEAPGPREELRSRGR) match the Nuclear localization signal motif. The span at 17 to 29 (KKEAPGPREELRS) shows a compositional bias: basic and acidic residues. Ser-34 carries the phosphoserine modification. The segment covering 45–63 (GKAEKSRQTAKKARIEEPS) has biased composition (basic and acidic residues). Ser-77, Ser-79, Ser-101, Ser-103, and Ser-107 each carry phosphoserine. A compositionally biased stretch (basic and acidic residues) spans 108-128 (LDGRSINDDGSSDPRDIDQDN). Residues 129 to 152 (RSTSPSIYSPGSVENDSDSSSGLS) show a composition bias toward polar residues. Composition is skewed to pro residues over residues 158–174 (PYHPPPLFPPSPPPPDS) and 208–217 (GPPPGAPPTH). Composition is skewed to low complexity over residues 240-253 (GAAASSVGAPSGGK) and 262-273 (IPISSSGASGAP). A compositionally biased stretch (pro residues) spans 345-374 (PPGPEKGPTLAPSPHPLPPASSSAPGPPMR). Positions 378-396 (SSSSSSAAASSSSSSSSAS) are enriched in low complexity. Polar residues predominate over residues 416–437 (SMSVSNQPPKYTQPSLPSQAVW). Positions 476-491 (THHHHQQQPQQQHHHG) are enriched in basic residues. Residues 503–553 (HPLESSNSHHAHPYNMSPSLGSLRPYPPGPAHLPPPHGQVSYNQAGPNGPP) are involved in binding BAIAP2. A compositionally biased stretch (pro residues) spans 527–539 (PYPPGPAHLPPPH). A compositionally biased stretch (low complexity) spans 547–584 (AGPNGPPVSSSNSSGSSSQASYSCSHPSSSQGPQGASY). Ser-617 bears the Phosphoserine mark. Position 626 is an N6-acetyllysine (Lys-626). Thr-638 carries the post-translational modification Phosphothreonine. Ser-646 is subject to Phosphoserine. Thr-654 is modified (phosphothreonine). Pro residues-rich tracts occupy residues 693-703 (LPPPPAAPTTG) and 722-737 (PESPVPPARSPSPPPK). Ser-724 bears the Phosphoserine; by MAPK8 mark. Residues Ser-731 and Ser-733 each carry the phosphoserine modification. Residues 780–824 (KRADLVEKVRREAEQRAREEKEREREREREKEREREKERELERSV) are compositionally biased toward basic and acidic residues. Residues 864–879 (DTPALRTLSEYARPHV) form a required for interaction with FAT1 region. Phosphoserine is present on Ser-881. The interval 913 to 932 (PAAREREREARERDLRDRLK) is disordered. Residues 914-932 (AAREREREARERDLRDRLK) are compositionally biased toward basic and acidic residues. Positions 1018–1026 (ALGNDPLAR) match the Nuclear export signal motif. Position 1100 is an asymmetric dimethylarginine (Arg-1100). Residue Lys-1168 forms a Glycyl lysine isopeptide (Lys-Gly) (interchain with G-Cter in SUMO2) linkage.

Interacts with BAIAP2, WWP1, WWP2, WWP3 and RERE. Interacts (via its N-terminus) with MTG8; the interaction enhances transcriptional repression of MTG8. Interacts with PQBP1. Interacts with NR2E1; the interaction represses the transcriptional activity of NR2E1. Interacts with FAT1 (via a C-terminal domain). In terms of processing, phosphorylated in vitro by MAPK8/JNK1 on Ser-724. Widely expressed. Most abundant in the brain.

The protein localises to the cytoplasm. Its subcellular location is the perinuclear region. It localises to the cell junction. It is found in the nucleus. Transcriptional corepressor. Corepressor of MTG8 transcriptional repression. Has some intrinsic repression activity which is independent of the number of the poly-Q repeats. Recruits NR2E1 to repress transcription. Promotes vascular smooth cell (VSMC) migration and orientation. This Mus musculus (Mouse) protein is Atrophin-1 (Atn1).